The following is a 178-amino-acid chain: MLIALTGTPGTGKSSVAERLRERGYKVATVVELAEKHGCIIDEEDGEIVIDVESLAARIDFEGIVEGHLSHLLKPDVAIVLRCNPAVLRERLKGRNWSEEKLLENLEAEMLDVILVEALEHASEVYEIDTTEMSLEEVIEAVEAIIRGDREARKRYKPGGIDWLSELEDRIEEFMRKV.

ATP contacts are provided by Gly-10, Gly-12, Lys-13, Ser-14, and Ser-15. Residues 29 to 50 (TVVELAEKHGCIIDEEDGEIVI) are NMP. The segment at 94-104 (GRNWSEEKLLE) is LID. Arg-95 serves as a coordination point for ATP.

The protein belongs to the adenylate kinase family. AK6 subfamily. Interacts with uS11. Not a structural component of 40S pre-ribosomes, but transiently interacts with them by binding to uS11.

It carries out the reaction AMP + ATP = 2 ADP. It catalyses the reaction ATP + H2O = ADP + phosphate + H(+). Its function is as follows. Broad-specificity nucleoside monophosphate (NMP) kinase that catalyzes the reversible transfer of the terminal phosphate group between nucleoside triphosphates and monophosphates. Also has ATPase activity. Involved in the late maturation steps of the 30S ribosomal particles, specifically 16S rRNA maturation. While NMP activity is not required for ribosome maturation, ATPase activity is. Associates transiently with small ribosomal subunit protein uS11. ATP hydrolysis breaks the interaction with uS11. May temporarily remove uS11 from the ribosome to enable a conformational change of the ribosomal RNA that is needed for the final maturation step of the small ribosomal subunit. The protein is Putative adenylate kinase of Archaeoglobus fulgidus (strain ATCC 49558 / DSM 4304 / JCM 9628 / NBRC 100126 / VC-16).